A 530-amino-acid polypeptide reads, in one-letter code: C2H2-type transcription factor MSN2 (530 aa).

2 C2H2-type zinc fingers span residues 409–437 (FVCDLCNRRFRRQEHLKRHYRSLHTQEKP) and 438–465 (FECNECGKKFSRSDNLAQHARTHASGGA).

Its subcellular location is the nucleus. The protein localises to the cytoplasm. Its function is as follows. Transcription factor that acts as a key downstream transcription factor in the HOG1-MAPK pathway. Plays crucial roles in the regulation of dimorphism transition, aggravated pigmentation, conidiation, microsclerotia formation and subsequent virulence towards Spodoptera litura larvae. More specifically regulates the expression of genes involved in antioxidation, pigment biosynthesis and ion transport and storage. This is C2H2-type transcription factor MSN2 from Metarhizium rileyi (strain RCEF 4871) (Nomuraea rileyi).